A 405-amino-acid chain; its full sequence is Arginine biosynthesis bifunctional protein ArgJ (405 aa).

Residues Thr-152, Lys-178, Thr-189, Glu-276, Asn-400, and Thr-405 each coordinate substrate. Catalysis depends on Thr-189, which acts as the Nucleophile.

It belongs to the ArgJ family. As to quaternary structure, heterotetramer of two alpha and two beta chains.

Its subcellular location is the cytoplasm. The catalysed reaction is N(2)-acetyl-L-ornithine + L-glutamate = N-acetyl-L-glutamate + L-ornithine. The enzyme catalyses L-glutamate + acetyl-CoA = N-acetyl-L-glutamate + CoA + H(+). The protein operates within amino-acid biosynthesis; L-arginine biosynthesis; L-ornithine and N-acetyl-L-glutamate from L-glutamate and N(2)-acetyl-L-ornithine (cyclic): step 1/1. Its pathway is amino-acid biosynthesis; L-arginine biosynthesis; N(2)-acetyl-L-ornithine from L-glutamate: step 1/4. In terms of biological role, catalyzes two activities which are involved in the cyclic version of arginine biosynthesis: the synthesis of N-acetylglutamate from glutamate and acetyl-CoA as the acetyl donor, and of ornithine by transacetylation between N(2)-acetylornithine and glutamate. This chain is Arginine biosynthesis bifunctional protein ArgJ, found in Pseudomonas syringae pv. tomato (strain ATCC BAA-871 / DC3000).